The following is a 272-amino-acid chain: Glycosylphosphatidylinositol anchor biosynthesis protein 11 (272 aa).

Residues 21-31 are compositionally biased toward polar residues; it reads QSTSTTKSTPG. A disordered region spans residues 21-48; that stretch reads QSTSTTKSTPGSQATESSTTTAGSSSSL. Residues 32–48 show a composition bias toward low complexity; sequence SQATESSTTTAGSSSSL. 5 consecutive transmembrane segments (helical) span residues 91 to 111, 145 to 165, 177 to 197, 215 to 235, and 248 to 268; these read VMLN…LLCL, LLAS…MVLF, FLCA…VHGV, TFGG…PIPL, and ILCG…TLFW.

Belongs to the PIGF family.

Its subcellular location is the endoplasmic reticulum membrane. It participates in glycolipid biosynthesis; glycosylphosphatidylinositol-anchor biosynthesis. Functionally, acts in the GPI biosynthetic pathway between GlcNAc-PI synthesis and GPI transfer to protein. This Neurospora crassa (strain ATCC 24698 / 74-OR23-1A / CBS 708.71 / DSM 1257 / FGSC 987) protein is Glycosylphosphatidylinositol anchor biosynthesis protein 11 (gpi-11).